The sequence spans 903 residues: KAT8 regulatory NSL complex subunit 1-like protein (903 aa).

Disordered regions lie at residues 319 to 343 (DSDA…DECN), 419 to 441 (MPKS…PSSP), and 652 to 676 (TECT…HRSE). Polar residues-rich tracts occupy residues 423-441 (PQGT…PSSP) and 652-661 (TECTSSYSPD). Residues 748 to 862 (EIITPSWKEV…ESPKGKTIHW (115 aa)) form the PEHE domain.

In Xenopus tropicalis (Western clawed frog), this protein is KAT8 regulatory NSL complex subunit 1-like protein (kansl1l).